Consider the following 83-residue polypeptide: Beta-defensin 119 (83 aa).

The signal sequence occupies residues Met1–Gly20. Disulfide bonds link Cys27–Cys54, Cys34–Cys48, and Cys38–Cys55.

It belongs to the beta-defensin family.

Its subcellular location is the secreted. In terms of biological role, has antibacterial activity. The protein is Beta-defensin 119 (DEFB119) of Bos taurus (Bovine).